The sequence spans 194 residues: Large ribosomal subunit protein eL15 (194 aa).

Residues 164–194 (AGRKARGLRRKGRGAEKVRPSLRANFRKKRR) form a disordered region. The span at 166–175 (RKARGLRRKG) shows a compositional bias: basic residues.

The protein belongs to the eukaryotic ribosomal protein eL15 family.

In Archaeoglobus fulgidus (strain ATCC 49558 / DSM 4304 / JCM 9628 / NBRC 100126 / VC-16), this protein is Large ribosomal subunit protein eL15 (rpl15e).